Here is a 65-residue protein sequence, read N- to C-terminus: U12-theraphotoxin-Cg1a (65 aa).

The signal sequence occupies residues methionine 1–alanine 21. Residues isoleucine 22–arginine 29 constitute a propeptide that is removed on maturation. Disulfide bonds link cysteine 31-cysteine 45, cysteine 38-cysteine 50, and cysteine 44-cysteine 57.

This sequence belongs to the neurotoxin 10 (Hwtx-1) family. 31 (Jztx-15) subfamily. As to expression, expressed by the venom gland.

Its subcellular location is the secreted. Probable ion channel inhibitor. The protein is U12-theraphotoxin-Cg1a of Chilobrachys guangxiensis (Chinese earth tiger tarantula).